We begin with the raw amino-acid sequence, 220 residues long: Phosphatidylserine decarboxylase proenzyme (220 aa).

The active-site Schiff-base intermediate with substrate; via pyruvic acid is Ser188. Ser188 is modified (pyruvic acid (Ser); by autocatalysis).

It belongs to the phosphatidylserine decarboxylase family. PSD-A subfamily. As to quaternary structure, heterodimer of a large membrane-associated beta subunit and a small pyruvoyl-containing alpha subunit. The cofactor is pyruvate. In terms of processing, is synthesized initially as an inactive proenzyme. Formation of the active enzyme involves a self-maturation process in which the active site pyruvoyl group is generated from an internal serine residue via an autocatalytic post-translational modification. Two non-identical subunits are generated from the proenzyme in this reaction, and the pyruvate is formed at the N-terminus of the alpha chain, which is derived from the carboxyl end of the proenzyme. The post-translation cleavage follows an unusual pathway, termed non-hydrolytic serinolysis, in which the side chain hydroxyl group of the serine supplies its oxygen atom to form the C-terminus of the beta chain, while the remainder of the serine residue undergoes an oxidative deamination to produce ammonia and the pyruvoyl prosthetic group on the alpha chain.

It localises to the cell membrane. The enzyme catalyses a 1,2-diacyl-sn-glycero-3-phospho-L-serine + H(+) = a 1,2-diacyl-sn-glycero-3-phosphoethanolamine + CO2. Its pathway is phospholipid metabolism; phosphatidylethanolamine biosynthesis; phosphatidylethanolamine from CDP-diacylglycerol: step 2/2. Its function is as follows. Catalyzes the formation of phosphatidylethanolamine (PtdEtn) from phosphatidylserine (PtdSer). In Parabacteroides distasonis (strain ATCC 8503 / DSM 20701 / CIP 104284 / JCM 5825 / NCTC 11152), this protein is Phosphatidylserine decarboxylase proenzyme.